The chain runs to 438 residues: MAASARGLRTLQSAHSSTTVPRLQLAVSRCYATTTSPDPPITNSSNSSNSSNSTPTPKQRITAFKDKLNAGPSFSDFVSGGGGGGASNDRVPLDPAEAYALKTALVGPPGRKKQIIRLPSWLKTPIPDTPNYRRIKSDLRGLNLHTVCEEARCPNISDCWGGSSKSAATATIMLMGDTCTRGCRFCSVKTSRTPPPLDPHEPENTAEALSRWGLGYVVMTSVDRDDLADGGARHVVETVRKVKQKAPGILLECLTGDYAGDLEMVALVATSGLDVFAHNVETVEALTPFVRDRRATFQQSLRVLKAAKEARPELITKTSIMLGLGETETQLWETLRALRAVDVDVVTFGQYMRPTKRHMAVHEYVRPEVFDLWKERALEMGFLYCASGPLVRSSYKAGEAFIENVLKKRRGEGADGGDGGNSTRREDVERLVAGGVVR.

The N-terminal 31 residues, 1-31 (MAASARGLRTLQSAHSSTTVPRLQLAVSRCY), are a transit peptide targeting the mitochondrion. Residues 34–57 (TTSPDPPITNSSNSSNSSNSTPTP) are compositionally biased toward low complexity. Residues 34–58 (TTSPDPPITNSSNSSNSSNSTPTPK) form a disordered region. Positions 148, 153, 159, 179, 183, 186, and 394 each coordinate [4Fe-4S] cluster. A Radical SAM core domain is found at 162–383 (GSSKSAATAT…KERALEMGFL (222 aa)).

It belongs to the radical SAM superfamily. Lipoyl synthase family. It depends on [4Fe-4S] cluster as a cofactor.

The protein localises to the mitochondrion. The catalysed reaction is [[Fe-S] cluster scaffold protein carrying a second [4Fe-4S](2+) cluster] + N(6)-octanoyl-L-lysyl-[protein] + 2 oxidized [2Fe-2S]-[ferredoxin] + 2 S-adenosyl-L-methionine + 4 H(+) = [[Fe-S] cluster scaffold protein] + N(6)-[(R)-dihydrolipoyl]-L-lysyl-[protein] + 4 Fe(3+) + 2 hydrogen sulfide + 2 5'-deoxyadenosine + 2 L-methionine + 2 reduced [2Fe-2S]-[ferredoxin]. The protein operates within protein modification; protein lipoylation via endogenous pathway; protein N(6)-(lipoyl)lysine from octanoyl-[acyl-carrier-protein]: step 2/2. Its function is as follows. Catalyzes the radical-mediated insertion of two sulfur atoms into the C-6 and C-8 positions of the octanoyl moiety bound to the lipoyl domains of lipoate-dependent enzymes, thereby converting the octanoylated domains into lipoylated derivatives. The chain is Lipoyl synthase, mitochondrial from Paracoccidioides brasiliensis (strain Pb18).